The following is a 351-amino-acid chain: UDP-3-O-acylglucosamine N-acyltransferase (351 aa).

His240 serves as the catalytic Proton acceptor.

This sequence belongs to the transferase hexapeptide repeat family. LpxD subfamily. In terms of assembly, homotrimer.

It carries out the reaction a UDP-3-O-[(3R)-3-hydroxyacyl]-alpha-D-glucosamine + a (3R)-hydroxyacyl-[ACP] = a UDP-2-N,3-O-bis[(3R)-3-hydroxyacyl]-alpha-D-glucosamine + holo-[ACP] + H(+). Its pathway is bacterial outer membrane biogenesis; LPS lipid A biosynthesis. Catalyzes the N-acylation of UDP-3-O-acylglucosamine using 3-hydroxyacyl-ACP as the acyl donor. Is involved in the biosynthesis of lipid A, a phosphorylated glycolipid that anchors the lipopolysaccharide to the outer membrane of the cell. In Pseudomonas fluorescens (strain SBW25), this protein is UDP-3-O-acylglucosamine N-acyltransferase.